The following is a 228-amino-acid chain: MAYPLQLGFQDATSPVMEELLHFHDHTLMIIFLISSLVLYIIMLMLTSKLVHTNMMNVQEMEMIWTILPAIILILIALPSLHTLYMMDEINNPLLTIKTMGHQWFWSYEYTDYEDLAFDSYMITTDSLKFGELRLLEVDNRMVLPTDLPVRVLVSSEDVLHSWAVPSLGLKTDAIPGRLNQVTLTSMRPGLFYGQCSEICGANHSFMPIVLELVPLKYFENWSASLAQ.

Over 1-14 the chain is Mitochondrial intermembrane; that stretch reads MAYPLQLGFQDATS. Residues 15 to 45 form a helical membrane-spanning segment; sequence PVMEELLHFHDHTLMIIFLISSLVLYIIMLM. Topologically, residues 46–59 are mitochondrial matrix; sequence LTSKLVHTNMMNVQ. The helical transmembrane segment at 60–87 threads the bilayer; that stretch reads EMEMIWTILPAIILILIALPSLHTLYMM. The Mitochondrial intermembrane portion of the chain corresponds to 88-228; sequence DEINNPLLTI…FENWSASLAQ (141 aa). H161, C196, E198, C200, H204, and M207 together coordinate Cu cation. Residue E198 coordinates Mg(2+). Y218 is subject to Phosphotyrosine.

This sequence belongs to the cytochrome c oxidase subunit 2 family. Component of the cytochrome c oxidase (complex IV, CIV), a multisubunit enzyme composed of 14 subunits. The complex is composed of a catalytic core of 3 subunits MT-CO1, MT-CO2 and MT-CO3, encoded in the mitochondrial DNA, and 11 supernumerary subunits COX4I, COX5A, COX5B, COX6A, COX6B, COX6C, COX7A, COX7B, COX7C, COX8 and NDUFA4, which are encoded in the nuclear genome. The complex exists as a monomer or a dimer and forms supercomplexes (SCs) in the inner mitochondrial membrane with NADH-ubiquinone oxidoreductase (complex I, CI) and ubiquinol-cytochrome c oxidoreductase (cytochrome b-c1 complex, complex III, CIII), resulting in different assemblies (supercomplex SCI(1)III(2)IV(1) and megacomplex MCI(2)III(2)IV(2)). Found in a complex with TMEM177, COA6, COX18, COX20, SCO1 and SCO2. Interacts with TMEM177 in a COX20-dependent manner. Interacts with COX20. Interacts with COX16. It depends on Cu cation as a cofactor.

It is found in the mitochondrion inner membrane. It catalyses the reaction 4 Fe(II)-[cytochrome c] + O2 + 8 H(+)(in) = 4 Fe(III)-[cytochrome c] + 2 H2O + 4 H(+)(out). Component of the cytochrome c oxidase, the last enzyme in the mitochondrial electron transport chain which drives oxidative phosphorylation. The respiratory chain contains 3 multisubunit complexes succinate dehydrogenase (complex II, CII), ubiquinol-cytochrome c oxidoreductase (cytochrome b-c1 complex, complex III, CIII) and cytochrome c oxidase (complex IV, CIV), that cooperate to transfer electrons derived from NADH and succinate to molecular oxygen, creating an electrochemical gradient over the inner membrane that drives transmembrane transport and the ATP synthase. Cytochrome c oxidase is the component of the respiratory chain that catalyzes the reduction of oxygen to water. Electrons originating from reduced cytochrome c in the intermembrane space (IMS) are transferred via the dinuclear copper A center (CU(A)) of subunit 2 and heme A of subunit 1 to the active site in subunit 1, a binuclear center (BNC) formed by heme A3 and copper B (CU(B)). The BNC reduces molecular oxygen to 2 water molecules using 4 electrons from cytochrome c in the IMS and 4 protons from the mitochondrial matrix. This Loxodonta africana (African elephant) protein is Cytochrome c oxidase subunit 2 (MT-CO2).